A 161-amino-acid polypeptide reads, in one-letter code: Regulatory protein RecX (161 aa).

Belongs to the RecX family.

It localises to the cytoplasm. Its function is as follows. Modulates RecA activity. The chain is Regulatory protein RecX from Thermotoga petrophila (strain ATCC BAA-488 / DSM 13995 / JCM 10881 / RKU-1).